Consider the following 142-residue polypeptide: Alpha-lactalbumin (142 aa).

The N-terminal stretch at 1–19 is a signal peptide; sequence MMSFVSLLLVGILFHATQA. The region spanning 20 to 142 is the C-type lysozyme domain; the sequence is EQLTKCEVFQ…KLDQWLCEKL (123 aa). Intrachain disulfides connect Cys25–Cys139, Cys47–Cys130, Cys80–Cys96, and Cys92–Cys110. 2 N-linked (GlcNAc...) asparagine glycosylation sites follow: Asn64 and Asn93. Positions 98, 101, 103, 106, and 107 each coordinate Ca(2+).

It belongs to the glycosyl hydrolase 22 family. In terms of assembly, lactose synthase (LS) is a heterodimer of a catalytic component, beta1,4-galactosyltransferase (beta4Gal-T1) and a regulatory component, alpha-lactalbumin (LA). As to expression, mammary gland specific. Secreted in milk.

Its subcellular location is the secreted. Functionally, regulatory subunit of lactose synthase, changes the substrate specificity of galactosyltransferase in the mammary gland making glucose a good acceptor substrate for this enzyme. This enables LS to synthesize lactose, the major carbohydrate component of milk. In other tissues, galactosyltransferase transfers galactose onto the N-acetylglucosamine of the oligosaccharide chains in glycoproteins. This chain is Alpha-lactalbumin (LALBA), found in Capra hircus (Goat).